The chain runs to 398 residues: Phosphoglycerate kinase (398 aa).

Substrate contacts are provided by residues 21 to 23 (DFN), arginine 36, 59 to 62 (HLGR), arginine 119, and arginine 157. ATP contacts are provided by residues lysine 208, glycine 296, glutamate 327, and 354–357 (GGDS).

This sequence belongs to the phosphoglycerate kinase family. In terms of assembly, monomer.

The protein localises to the cytoplasm. It catalyses the reaction (2R)-3-phosphoglycerate + ATP = (2R)-3-phospho-glyceroyl phosphate + ADP. It participates in carbohydrate degradation; glycolysis; pyruvate from D-glyceraldehyde 3-phosphate: step 2/5. This chain is Phosphoglycerate kinase, found in Streptococcus uberis (strain ATCC BAA-854 / 0140J).